Consider the following 447-residue polypeptide: Clusterin (447 aa).

The signal sequence occupies residues 1-21 (MKILLLCVALLLTWDNGMVLG). The Nuclear localization signal motif lies at 77–80 (KKKK). 5 cysteine pairs are disulfide-bonded: Cys101–Cys312, Cys112–Cys304, Cys115–Cys301, Cys120–Cys294, and Cys128–Cys284. Asn102 carries N-linked (GlcNAc...) asparagine glycosylation. Phosphoserine is present on Ser132. 5 N-linked (GlcNAc...) asparagine glycosylation sites follow: Asn144, Asn290, Asn327, Asn353, and Asn373. Residue Ser394 is modified to Phosphoserine. Positions 441-445 (RRKSR) match the Nuclear localization signal motif.

This sequence belongs to the clusterin family. As to quaternary structure, antiparallel disulfide-linked heterodimer of an alpha chain and a beta chain. Self-associates and forms higher oligomers. Interacts with a broad range of misfolded proteins, including APP, APOC2 and LYZ. Slightly acidic pH promotes interaction with misfolded proteins. Forms high-molecular weight oligomers upon interaction with misfolded proteins. Interacts with APOA1, LRP2, CLUAP1 and PON1. Interacts with the complement membrane attack complex. Interacts (via alpha chain) with XRCC6. Interacts with SYVN1, COMMD1, BTRC, CUL1 and with ubiquitin and SCF (SKP1-CUL1-F-box protein) E3 ubiquitin-protein ligase complexes. Interacts (via alpha chain) with BAX in stressed cells, where BAX undergoes a conformation change leading to association with the mitochondrial membrane. Does not interact with BAX in unstressed cells. Found in a complex with LTF, CLU, EPPIN and SEMG1. Interacts (immaturely glycosylated pre-secreted form) with HSPA5; this interaction promotes CLU stability and facilitates stress-induced CLU retrotranslocation from the secretory pathway to the mitochondria, thereby reducing stress-induced apoptosis by stabilizing mitochondrial membrane integrity. Interacts with BCL2L1; this interaction releases and activates BAX and promotes cell death. Interacts with TGFBR2 and ACVR1. Interacts (secreted form) with STMN3; this interaction may act as an important modulator during neuronal differentiation. Interacts with VLDLR and LRP8. Post-translationally, proteolytically cleaved on its way through the secretory system, probably within the Golgi lumen. Proteolytic cleavage is not necessary for its chaperone activity. All non-secreted forms are not proteolytically cleaved. Chaperone activity of uncleaved forms is dependent on a non-reducing environment. Polyubiquitinated, leading to proteasomal degradation. Under cellular stress, the intracellular level of cleaved form is reduced due to proteasomal degradation. In terms of processing, extensively glycosylated with sulfated N-linked carbohydrates. About 30% of the protein mass is comprised of complex N-linked carbohydrate. Endoplasmic reticulum (ER) stress induces changes in glycosylation status and increases level of hypoglycosylated forms. Core carbohydrates are essential for chaperone activity. Non-secreted forms are hypoglycosylated or unglycosylated. In terms of tissue distribution, detected in Sertoli cells (at protein level). Detected in cultured Sertoli cells, testis, epididymis, liver and brain.

The protein localises to the secreted. It is found in the nucleus. It localises to the cytoplasm. Its subcellular location is the mitochondrion membrane. The protein resides in the cytosol. The protein localises to the microsome. It is found in the endoplasmic reticulum. It localises to the mitochondrion. Its subcellular location is the perinuclear region. The protein resides in the cytoplasmic vesicle. The protein localises to the secretory vesicle. It is found in the chromaffin granule. Functionally, functions as extracellular chaperone that prevents aggregation of non native proteins. Prevents stress-induced aggregation of blood plasma proteins. Inhibits formation of amyloid fibrils by APP, APOC2, B2M, CALCA, CSN3, SNCA and aggregation-prone LYZ variants (in vitro). Does not require ATP. Maintains partially unfolded proteins in a state appropriate for subsequent refolding by other chaperones, such as HSPA8/HSC70. Does not refold proteins by itself. Binding to cell surface receptors triggers internalization of the chaperone-client complex and subsequent lysosomal or proteasomal degradation. When secreted, protects cells against apoptosis and against cytolysis by complement: inhibits assembly of the complement membrane attack complex (MAC) by preventing polymerization of C9 pore component of the MAC complex. Intracellular forms interact with ubiquitin and SCF (SKP1-CUL1-F-box protein) E3 ubiquitin-protein ligase complexes and promote the ubiquitination and subsequent proteasomal degradation of target proteins. Promotes proteasomal degradation of COMMD1 and IKBKB. Modulates NF-kappa-B transcriptional activity. Following stress, promotes apoptosis. Inhibits apoptosis when associated with the mitochondrial membrane by interference with BAX-dependent release of cytochrome c into the cytoplasm. Plays a role in the regulation of cell proliferation. An intracellular form suppresses stress-induced apoptosis by stabilizing mitochondrial membrane integrity through interaction with HSPA5. Secreted form does not affect caspase or BAX-mediated intrinsic apoptosis and TNF-induced NF-kappa-B-activity. Secreted form act as an important modulator during neuronal differentiation through interaction with STMN3. Plays a role in the clearance of immune complexes that arise during cell injury. This chain is Clusterin, found in Rattus norvegicus (Rat).